The sequence spans 56 residues: Large ribosomal subunit protein bL32 (56 aa).

The protein belongs to the bacterial ribosomal protein bL32 family.

The protein is Large ribosomal subunit protein bL32 of Prochlorococcus marinus (strain MIT 9301).